The chain runs to 807 residues: Spondin-1 (807 aa).

The N-terminal stretch at 1–28 is a signal peptide; sequence MRLSPVLLRLSRGPALLALALPLAVALA. The region spanning 29 to 194 is the Reelin domain; that stretch reads FSDETLDKVP…DSTFDGVTDK (166 aa). 17 cysteine pairs are disulfide-bonded: Cys44–Cys128, Cys156–Cys182, Cys199–Cys336, Cys200–Cys340, Cys202–Cys415, Cys443–Cys480, Cys454–Cys489, Cys459–Cys494, Cys502–Cys538, Cys513–Cys517, Cys548–Cys554, Cys559–Cys595, Cys570–Cys574, Cys605–Cys610, Cys615–Cys650, Cys626–Cys630, and Cys660–Cys665. The region spanning 195-388 is the Spondin domain; that stretch reads PILDCCACGT…LTSLDHPQSP (194 aa). A glycan (N-linked (GlcNAc...) asparagine) is linked at Asn214. Residues Asp325, Asp354, and Asp358 each coordinate Ca(2+). TSP type-1 domains are found at residues 442 to 495, 501 to 555, 558 to 611, 614 to 666, 668 to 721, and 754 to 806; these read TCIY…PGCS, TCTM…EECS, SCLT…PECH, PCLL…PECP, DCEL…RKCL, and GCRM…NVHP. N-linked (GlcNAc...) asparagine glycosylation is present at Asn681.

In terms of assembly, binds to the central extracellular domain of APP and inhibits beta-secretase cleavage of APP.

Its subcellular location is the secreted. It is found in the extracellular space. The protein resides in the extracellular matrix. Its function is as follows. Cell adhesion protein that promotes the attachment of spinal cord and sensory neuron cells and the outgrowth of neurites in vitro. May contribute to the growth and guidance of axons in both the spinal cord and the PNS. Major factor for vascular smooth muscle cell. This Bos taurus (Bovine) protein is Spondin-1 (SPON1).